The following is a 56-amino-acid chain: Single-pass membrane and coiled-coil domain-containing protein 4 homolog (56 aa).

The interval 1 to 27 (MRQLPGKAAKETRKMKRERKQQNKEGH) is disordered. A coiled-coil region spans residues 9–31 (AKETRKMKRERKQQNKEGHNRVV). A helical membrane pass occupies residues 30–50 (VVTVAIPVCLAVFVMLIVYVY).

It belongs to the SMCO4 family.

The protein localises to the membrane. The polypeptide is Single-pass membrane and coiled-coil domain-containing protein 4 homolog (Nematostella vectensis (Starlet sea anemone)).